The primary structure comprises 1603 residues: Pentafunctional AROM polypeptide (1603 aa).

Residues 1 to 384 (MGVPTKISIL…YEPRASTVSN (384 aa)) form a 3-dehydroquinate synthase region. NAD(+) is bound by residues 44-46 (DTN), 81-84 (ESSK), 114-116 (GGV), and Asp119. Position 130 (Arg130) interacts with 7-phospho-2-dehydro-3-deoxy-D-arabino-heptonate. 139–140 (TT) lines the NAD(+) pocket. Positions 146 and 152 each coordinate 7-phospho-2-dehydro-3-deoxy-D-arabino-heptonate. Lys161 contacts NAD(+). A 7-phospho-2-dehydro-3-deoxy-D-arabino-heptonate-binding site is contributed by Asn162. NAD(+)-binding positions include 179–182 (FLNT) and Asn190. Glu194 is a Zn(2+) binding site. Residues 194 to 197 (EVIK) and Lys250 contribute to the 7-phospho-2-dehydro-3-deoxy-D-arabino-heptonate site. The active-site Proton acceptor; for 3-dehydroquinate synthase activity is Glu260. Residues 264 to 268 (RNLLN) and His271 each bind 7-phospho-2-dehydro-3-deoxy-D-arabino-heptonate. Position 271 (His271) interacts with Zn(2+). Catalysis depends on His275, which acts as the Proton acceptor; for 3-dehydroquinate synthase activity. Positions 287 and 356 each coordinate 7-phospho-2-dehydro-3-deoxy-D-arabino-heptonate. His287 is a Zn(2+) binding site. The EPSP synthase stretch occupies residues 397–842 (VYPGFPKSLN…WNTLAQTFKV (446 aa)). Catalysis depends on Cys824, which acts as the For EPSP synthase activity. The tract at residues 872 to 1064 (AASIFIIGMR…RRKENTFFVS (193 aa)) is shikimate kinase. An ATP-binding site is contributed by 879 to 886 (GMRGAGKT). The 3-dehydroquinase stretch occupies residues 1065–1285 (LTFPDLTPAS…AAPGQLSARE (221 aa)). The active-site Proton acceptor; for 3-dehydroquinate dehydratase activity is the His1188. Lys1216 functions as the Schiff-base intermediate with substrate; for 3-dehydroquinate dehydratase activity in the catalytic mechanism. The interval 1298–1603 (AKKFAVIGKP…GVSSSDDTIS (306 aa)) is shikimate dehydrogenase.

In the N-terminal section; belongs to the sugar phosphate cyclases superfamily. Dehydroquinate synthase family. This sequence in the 2nd section; belongs to the EPSP synthase family. The protein in the 3rd section; belongs to the shikimate kinase family. It in the 4th section; belongs to the type-I 3-dehydroquinase family. In the C-terminal section; belongs to the shikimate dehydrogenase family. As to quaternary structure, homodimer. Requires Zn(2+) as cofactor.

Its subcellular location is the cytoplasm. It catalyses the reaction 7-phospho-2-dehydro-3-deoxy-D-arabino-heptonate = 3-dehydroquinate + phosphate. It carries out the reaction 3-dehydroquinate = 3-dehydroshikimate + H2O. The catalysed reaction is shikimate + NADP(+) = 3-dehydroshikimate + NADPH + H(+). The enzyme catalyses shikimate + ATP = 3-phosphoshikimate + ADP + H(+). It catalyses the reaction 3-phosphoshikimate + phosphoenolpyruvate = 5-O-(1-carboxyvinyl)-3-phosphoshikimate + phosphate. Its pathway is metabolic intermediate biosynthesis; chorismate biosynthesis; chorismate from D-erythrose 4-phosphate and phosphoenolpyruvate: step 2/7. The protein operates within metabolic intermediate biosynthesis; chorismate biosynthesis; chorismate from D-erythrose 4-phosphate and phosphoenolpyruvate: step 3/7. It functions in the pathway metabolic intermediate biosynthesis; chorismate biosynthesis; chorismate from D-erythrose 4-phosphate and phosphoenolpyruvate: step 4/7. It participates in metabolic intermediate biosynthesis; chorismate biosynthesis; chorismate from D-erythrose 4-phosphate and phosphoenolpyruvate: step 5/7. Its pathway is metabolic intermediate biosynthesis; chorismate biosynthesis; chorismate from D-erythrose 4-phosphate and phosphoenolpyruvate: step 6/7. Its function is as follows. The AROM polypeptide catalyzes 5 consecutive enzymatic reactions in prechorismate polyaromatic amino acid biosynthesis. This is Pentafunctional AROM polypeptide from Paracoccidioides brasiliensis (strain Pb03).